The primary structure comprises 127 residues: Small ribosomal subunit protein bS6 (127 aa).

Residues 102–127 (IMQGAEKGKSSRKEKVDAEAEASEEA) form a disordered region. Residues 107–119 (EKGKSSRKEKVDA) show a composition bias toward basic and acidic residues.

It belongs to the bacterial ribosomal protein bS6 family.

Its function is as follows. Binds together with bS18 to 16S ribosomal RNA. This chain is Small ribosomal subunit protein bS6, found in Coxiella burnetii (strain CbuK_Q154) (Coxiella burnetii (strain Q154)).